The chain runs to 313 residues: Small ribosomal subunit protein uS2 (313 aa).

Residues 234–243 (DEEAKEEKTK) show a composition bias toward basic and acidic residues. A disordered region spans residues 234–313 (DEEAKEEKTK…ASKAEAEEGK (80 aa)). The segment covering 244–256 (AKTTAKKVVTKKA) has biased composition (basic residues). Residues 266–297 (AEKKSEKPTTEKRPTKEAAETKETSEEPKTKE) show a composition bias toward basic and acidic residues.

It belongs to the universal ribosomal protein uS2 family.

The protein is Small ribosomal subunit protein uS2 of Coxiella burnetii (strain Dugway 5J108-111).